The sequence spans 612 residues: Dihydroxy-acid dehydratase (612 aa).

Asp-81 is a binding site for Mg(2+). Cys-122 contributes to the [2Fe-2S] cluster binding site. Positions 123 and 124 each coordinate Mg(2+). Lys-124 is modified (N6-carboxylysine). Cys-195 contacts [2Fe-2S] cluster. Residue Glu-491 participates in Mg(2+) binding. Catalysis depends on Ser-517, which acts as the Proton acceptor.

This sequence belongs to the IlvD/Edd family. In terms of assembly, homodimer. It depends on [2Fe-2S] cluster as a cofactor. Mg(2+) serves as cofactor.

It carries out the reaction (2R)-2,3-dihydroxy-3-methylbutanoate = 3-methyl-2-oxobutanoate + H2O. The enzyme catalyses (2R,3R)-2,3-dihydroxy-3-methylpentanoate = (S)-3-methyl-2-oxopentanoate + H2O. The protein operates within amino-acid biosynthesis; L-isoleucine biosynthesis; L-isoleucine from 2-oxobutanoate: step 3/4. Its pathway is amino-acid biosynthesis; L-valine biosynthesis; L-valine from pyruvate: step 3/4. In terms of biological role, functions in the biosynthesis of branched-chain amino acids. Catalyzes the dehydration of (2R,3R)-2,3-dihydroxy-3-methylpentanoate (2,3-dihydroxy-3-methylvalerate) into 2-oxo-3-methylpentanoate (2-oxo-3-methylvalerate) and of (2R)-2,3-dihydroxy-3-methylbutanoate (2,3-dihydroxyisovalerate) into 2-oxo-3-methylbutanoate (2-oxoisovalerate), the penultimate precursor to L-isoleucine and L-valine, respectively. This Rhizobium etli (strain ATCC 51251 / DSM 11541 / JCM 21823 / NBRC 15573 / CFN 42) protein is Dihydroxy-acid dehydratase.